Here is a 141-residue protein sequence, read N- to C-terminus: MYHHCCYGIITTLRPGLWCVLFFVHARHDTLLPHRQQHRRLRRHERLHRHDRRGLFRFRGLYSHLLLHVESFLRAAKDLPPPGYRVGRRGDHGLGKAPDGVGYRLLKEAIKIWEFPCLRLHDGRLFLRLGLCLVVIRARTF.

This is an uncharacterized protein from Human cytomegalovirus (strain AD169) (HHV-5).